The sequence spans 389 residues: Terminal nucleotidyltransferase 5D (389 aa).

The protein belongs to the TENT family. In terms of tissue distribution, restricted to testis.

The enzyme catalyses RNA(n) + ATP = RNA(n)-3'-adenine ribonucleotide + diphosphate. Catalyzes the transfer of one adenosine molecule from an ATP to an mRNA poly(A) tail bearing a 3'-OH terminal group. The polypeptide is Terminal nucleotidyltransferase 5D (Homo sapiens (Human)).